The chain runs to 549 residues: Cation/acetate symporter ActP (549 aa).

13 helical membrane-spanning segments follow: residues 33–53 (WQAIIMFLIFVVFTLGITYWA), 77–97 (LAIAGDYMSAASFLGISALVF), 103–123 (GLIYSLGFLVGWPIILFLIAE), 148–168 (ILSACGSLVVVALYLIAQMVG), 183–203 (IAVVLVGVLMMMYVLFGGMLA), 206–226 (WVQIIKAVLLLFGASFMAFMV), 262–282 (ISALSLGLGLMFGTAGLPHIL), 303–323 (GFMGYFYILTFIIGFGAIMLV), 355–375 (LFLGFISAVAFATILAVVAGL), 404–424 (VSKITVLILGVIAIILGVLFE), 428–448 (IAFMVGLAFAIAASCNFPIIL), 464–484 (GGWLGLITAVVLMILGPTIWV), and 493–513 (IFPYEYPALFSISVAFLGIWF).

It belongs to the sodium:solute symporter (SSF) (TC 2.A.21) family.

Its subcellular location is the cell inner membrane. In terms of biological role, transports acetate. This is Cation/acetate symporter ActP from Escherichia coli O17:K52:H18 (strain UMN026 / ExPEC).